A 388-amino-acid chain; its full sequence is Protein DJ-1 homolog D (388 aa).

PfpI endopeptidase domains follow at residues 5-190 (RTVL…KALG) and 198-383 (KRIL…ALLG). C120 acts as the Nucleophile in catalysis. C120 bears the Cysteine sulfenic acid (-SOH) mark. Residue H121 is part of the active site. The Nucleophile role is filled by C313. The residue at position 313 (C313) is a Cysteine sulfinic acid (-SO2H). The active site involves H314.

It belongs to the peptidase C56 family. Homotrimer. Post-translationally, cys-120 and Cys-313 are oxidized to sulfinic acid.

The catalysed reaction is (R)-S-lactoylglutathione = methylglyoxal + glutathione. Its function is as follows. Possesses glyoxalase I activity. Catalyzes the conversion of hemimercaptal, formed from methylglyoxal and glutathione, to S-lactoylglutathione. May be involved in oxidative stress response. This is Protein DJ-1 homolog D (DJ1D) from Arabidopsis thaliana (Mouse-ear cress).